The primary structure comprises 419 residues: Testin (419 aa).

A PET domain is found at 92-199; sequence MILTNPVAAK…GDVKLPSEMN (108 aa). Disordered stretches follow at residues 133–164 and 199–222; these read EKQP…PSKC and NAQG…GSKD. The span at 155–164 shows a compositional bias: basic and acidic residues; the sequence is PAHDQDPSKC. LIM zinc-binding domains are found at residues 232–295, 297–357, and 360–419; these read YSCY…CDSE, PRCA…NHAV, and QGCH…KMMS.

The protein belongs to the prickle / espinas / testin family. Interacts via LIM domain 1 with ZYX. Interacts (via LIM domain 3) with ENAH and VASP. Interacts with ALKBH4, talin, actin, alpha-actinin, GRIP1 and PXN. Interacts (via LIM domain 2) with ACTL7A (via N-terminus). Heterodimer with ACTL7A; the heterodimer interacts with ENAH to form a heterotrimer.

Its subcellular location is the cytoplasm. The protein localises to the cell junction. The protein resides in the focal adhesion. Its function is as follows. Scaffold protein that may play a role in cell adhesion, cell spreading and in the reorganization of the actin cytoskeleton. Plays a role in the regulation of cell proliferation. May act as a tumor suppressor. This Rattus norvegicus (Rat) protein is Testin (Tes).